Consider the following 819-residue polypeptide: Regulator of G-protein signaling rgs-7 (819 aa).

A compositionally biased stretch (acidic residues) spans 1-11; that stretch reads MSDEDADEYDD. Disordered stretches follow at residues 1–51, 112–135, and 149–259; these read MSDE…EMLW, GDDSSFRSRDRFVPPRRPRMGYGS, and SSTY…HNNE. Positions 32 to 44 are enriched in polar residues; the sequence is YQDTTESTGPSEA. Positions 112-124 are enriched in basic and acidic residues; that stretch reads GDDSSFRSRDRFV. A compositionally biased stretch (low complexity) spans 149-166; sequence SSTYSSSSEAHRLSSLRA. Residues 173 to 185 show a composition bias toward polar residues; the sequence is QLTSTTTSFQPLS. The segment covering 213–223 has biased composition (basic residues); that stretch reads RMYRKNPKYRR. Residues 234–259 show a composition bias toward basic and acidic residues; that stretch reads SRLEESTSQESERAVTPESWMEHNNE. The C2 domain occupies 290-429; sequence KHKDIRGIIF…KASQVVGDPF (140 aa). Disordered regions lie at residues 515-594 and 617-640; these read YRST…DDNG and FTFSPKHSSSKTNLRQLNGREEDK. Polar residues-rich tracts occupy residues 517-533, 559-568, and 617-632; these read STGSSDMRGRSTNNLLD, PSITTTTSEN, and FTFSPKHSSSKTNLRQ. The RGS domain occupies 682–800; the sequence is SFESLLNNKF…LRDRLFLDLL (119 aa).

In terms of assembly, interacts with egl-30.

In terms of biological role, inhibits signal transduction by increasing the GTPase activity of G protein alpha subunit egl-30 (G-alpha(q)), thereby driving it into its inactive GDP-bound form. May organize egl-30 into a stable multiprotein signaling complex, and thereby persistently inhibit egl-30 when triggered by calcium or phospholipids. The sequence is that of Regulator of G-protein signaling rgs-7 (rgs-7) from Caenorhabditis elegans.